Reading from the N-terminus, the 187-residue chain is UPF0301 protein VS_2679 (187 aa).

This sequence belongs to the UPF0301 (AlgH) family.

The polypeptide is UPF0301 protein VS_2679 (Vibrio atlanticus (strain LGP32) (Vibrio splendidus (strain Mel32))).